The primary structure comprises 346 residues: B3 domain-containing protein At3g25182 (346 aa).

The interval 168 to 187 is disordered; the sequence is KRRAVEQRKRTGGVKKAKVA. A DNA-binding region (TF-B3) is located at residues 237–338; that stretch reads FNNLLRNDFL…ILCFAMEQRS (102 aa).

It is found in the nucleus. In Arabidopsis thaliana (Mouse-ear cress), this protein is B3 domain-containing protein At3g25182.